The sequence spans 522 residues: Vicilin-like seed storage protein At4g36700 (522 aa).

A signal peptide spans 1-25 (MTRFAVLPLSVLLLVLLFLCTESLA). 5 N-linked (GlcNAc...) asparagine glycosylation sites follow: N206, N303, N341, N374, and N414. The 157-residue stretch at 265-421 (FNVFESEPDF…SLNVSSVTID (157 aa)) folds into the Cupin type-1 domain. The interval 457–522 (DERKRRHDER…EWEMEGEEES (66 aa)) is disordered. 2 stretches are compositionally biased toward basic and acidic residues: residues 466-491 (RKKE…EKKR) and 501-515 (EELR…KEWE).

It belongs to the 7S seed storage protein family.

In terms of biological role, seed storage protein. The sequence is that of Vicilin-like seed storage protein At4g36700 from Arabidopsis thaliana (Mouse-ear cress).